The primary structure comprises 323 residues: Dehydrogenase/reductase SDR family member 7B (323 aa).

The Cytoplasmic segment spans residues 1–17 (MISPSFRKGMLKERVMD). Residues 18 to 38 (LASQTTILPLLFGCLGIFSLF) traverse the membrane as a helical; Signal-anchor for type II membrane protein segment. The Lumenal segment spans residues 39–323 (RLLQRIRSKA…ARKERKSKSS (285 aa)). The NAD(+) site is built by S62 and L64. S192 provides a ligand contact to substrate. NAD(+) is bound by residues Y205, K209, and T240. The active-site Proton acceptor is the Y205.

The protein belongs to the short-chain dehydrogenases/reductases (SDR) family.

It localises to the endoplasmic reticulum membrane. Its function is as follows. Putative oxidoreductase. This Mus musculus (Mouse) protein is Dehydrogenase/reductase SDR family member 7B.